Here is a 485-residue protein sequence, read N- to C-terminus: UDP-N-acetylmuramate--L-alanine ligase (485 aa).

120-126 (GSHGKTT) is a binding site for ATP.

The protein belongs to the MurCDEF family.

It localises to the cytoplasm. The catalysed reaction is UDP-N-acetyl-alpha-D-muramate + L-alanine + ATP = UDP-N-acetyl-alpha-D-muramoyl-L-alanine + ADP + phosphate + H(+). It functions in the pathway cell wall biogenesis; peptidoglycan biosynthesis. In terms of biological role, cell wall formation. This Rickettsia conorii (strain ATCC VR-613 / Malish 7) protein is UDP-N-acetylmuramate--L-alanine ligase.